The chain runs to 412 residues: Eukaryotic initiation factor 4A-1 (412 aa).

Ala2 carries the post-translational modification N-acetylalanine. A Q motif motif is present at residues 39–67 (ESFDAMGLQENLLRGIYAYGFEKPSAIQQ). The region spanning 70–240 (IVPFCKGLDV…RKFMSKPVRI (171 aa)) is the Helicase ATP-binding domain. 83–90 (AQSGTGKT) contacts ATP. Ser104 is modified (phosphoserine). Thr145 carries the phosphothreonine modification. A DEAD box motif is present at residues 188–191 (DEAD). The Helicase C-terminal domain occupies 251-412 (GIKQFYVNVE…ELPSNVADLL (162 aa)).

Belongs to the DEAD box helicase family. eIF4A subfamily. As to quaternary structure, eIF4F is a multi-subunit complex, the composition of which varies with external and internal environmental conditions. It is composed of at least EIF4A, EIF4E and EIF4G. Interacts with CDKA-1. Interacts with MRF1, MRF2, MRF3/ECIP1 and MRF4. In terms of tissue distribution, highly expressed in the whole plant.

It localises to the cytoplasm. The enzyme catalyses ATP + H2O = ADP + phosphate + H(+). In terms of biological role, ATP-dependent RNA helicase which is a subunit of the eIF4F complex involved in cap recognition and is required for mRNA binding to ribosome. In the current model of translation initiation, eIF4A unwinds RNA secondary structures in the 5'-UTR of mRNAs which is necessary to allow efficient binding of the small ribosomal subunit, and subsequent scanning for the initiator codon. This is Eukaryotic initiation factor 4A-1 from Arabidopsis thaliana (Mouse-ear cress).